A 95-amino-acid chain; its full sequence is FXYD domain-containing ion transport regulator 6 (95 aa).

The N-terminal stretch at 1–18 is a signal peptide; it reads MELVLVFLCSLLAPTVLA. At 19–35 the chain is on the extracellular side; that stretch reads SAAEKEKEMDPFHYDYQ. The chain crosses the membrane as a helical span at residues 36–58; the sequence is TLRIGGLVFAVVLFSVGILLILS. Residues 59–95 are Cytoplasmic-facing; it reads RRCKCSFNQKPRAPGDEEAQVENLITANATEPQKAEN.

It belongs to the FXYD family. As to quaternary structure, regulatory subunit of the sodium/potassium-transporting ATPase which is composed of a catalytic alpha subunit, a non-catalytic beta subunit and an additional regulatory subunit. The regulatory subunit, a member of the FXYD protein family, modulates the enzymatic activity in a tissue- and isoform-specific way by changing affinities of the Na+/K+-ATPase toward Na(+), K(+) or ATP.

The protein localises to the cell membrane. Its function is as follows. Associates with and regulates the activity of the sodium/potassium-transporting ATPase (NKA) which catalyzes the hydrolysis of ATP coupled with the exchange of Na(+) and K(+) ions across the plasma membrane. Reduces the apparent affinity for intracellular Na(+) with no change in the apparent affinity for extracellular K(+). In addition to modulating NKA kinetics, may also function as a regulator of NKA localization to the plasma membrane. In Pongo abelii (Sumatran orangutan), this protein is FXYD domain-containing ion transport regulator 6 (FXYD6).